We begin with the raw amino-acid sequence, 504 residues long: Arabinose import ATP-binding protein AraG (504 aa).

ABC transporter domains lie at 8–243 (LSFR…MVGR) and 256–499 (YGEE…MPKV). Residue 40–47 (GENGAGKS) participates in ATP binding.

It belongs to the ABC transporter superfamily. Arabinose importer (TC 3.A.1.2.2) family. In terms of assembly, the complex is composed of two ATP-binding proteins (AraG), two transmembrane proteins (AraH) and a solute-binding protein (AraF).

The protein resides in the cell inner membrane. It catalyses the reaction L-arabinose(out) + ATP + H2O = L-arabinose(in) + ADP + phosphate + H(+). Part of the ABC transporter complex AraFGH involved in arabinose import. Responsible for energy coupling to the transport system. This Shigella dysenteriae serotype 1 (strain Sd197) protein is Arabinose import ATP-binding protein AraG.